Consider the following 223-residue polypeptide: UPF0173 metal-dependent hydrolase TV0864 (223 aa).

This sequence belongs to the UPF0173 family.

This is UPF0173 metal-dependent hydrolase TV0864 from Thermoplasma volcanium (strain ATCC 51530 / DSM 4299 / JCM 9571 / NBRC 15438 / GSS1).